Here is a 380-residue protein sequence, read N- to C-terminus: Crotonobetainyl-CoA reductase (380 aa).

Belongs to the acyl-CoA dehydrogenase family. Homotetramer. FAD serves as cofactor.

It localises to the cytoplasm. It catalyses the reaction 4-(trimethylamino)butanoyl-CoA + oxidized [electron-transfer flavoprotein] + H(+) = crotonobetainyl-CoA + reduced [electron-transfer flavoprotein]. It participates in amine and polyamine metabolism; carnitine metabolism. Functionally, catalyzes the reduction of crotonobetainyl-CoA to gamma-butyrobetainyl-CoA. The polypeptide is Crotonobetainyl-CoA reductase (Salmonella arizonae (strain ATCC BAA-731 / CDC346-86 / RSK2980)).